The chain runs to 124 residues: Small ribosomal subunit protein eS25 (124 aa).

The span at 1 to 22 shows a compositional bias: basic and acidic residues; it reads MPPKDSKQKKDTSKAKKDKDPV. The tract at residues 1–37 is disordered; it reads MPPKDSKQKKDTSKAKKDKDPVNKSGGKAKKKKWSKG. Over residues 27–37 the composition is skewed to basic residues; it reads GKAKKKKWSKG.

Belongs to the eukaryotic ribosomal protein eS25 family. As to quaternary structure, component of the small ribosomal subunit.

The protein resides in the cytoplasm. Component of the small ribosomal subunit. The ribosome is a large ribonucleoprotein complex responsible for the synthesis of proteins in the cell. This is Small ribosomal subunit protein eS25 (rps25) from Ictalurus punctatus (Channel catfish).